The chain runs to 345 residues: 3'-5' exoribonuclease 1 (345 aa).

Composition is skewed to basic and acidic residues over residues 1-11 (MEDERGREHGG) and 19-40 (PRPECEESRPLSVEKKQRCRLD). The tract at residues 1–40 (MEDERGREHGGDAAQQKTPRPECEESRPLSVEKKQRCRLD) is disordered. Ser58 carries the phosphoserine modification. One can recognise an SAP domain in the interval 72–106 (INRMSKEELRAKLSEFKLETRGVKDVLKKRLKNYY). Positions 126–302 (ICIIDFEATC…DDSKNIARIA (177 aa)) constitute an Exonuclease domain. Mg(2+)-binding residues include Asp130 and Glu132. Glu132 acts as the Proton acceptor in catalysis. 2 residues coordinate AMP: Glu132 and Ala133. Asp230 contacts Mg(2+). His289 functions as the Proton acceptor in the catalytic mechanism. An AMP-binding site is contributed by His289. Asp294 provides a ligand contact to Mg(2+).

In terms of assembly, identified in a histone pre-mRNA complex, at least composed of ERI1, LSM11, SLBP, SNRPB, SYNCRIP and YBX1. Binds to 40S and 60S ribosomal subunits and to 80S assembled ribosomes. Interacts in a cooperative manner with SLBP to the mature 3'-end of histone mRNAs. Found in a ternary complex with SLBP and the stem-loop structure of the 3'-end of histone mRNAs. It depends on Mg(2+) as a cofactor.

It localises to the cytoplasm. It is found in the nucleus. The protein resides in the nucleolus. It catalyses the reaction Exonucleolytic cleavage in the 3'- to 5'-direction to yield nucleoside 5'-phosphates.. Although it can bind simultaneously with SLBP to the 3'-end of histone mRNA, the presence of SLBP prevents the exonuclease activity. In terms of biological role, RNA exonuclease that binds to the 3'-end of histone mRNAs and degrades them, suggesting that it plays an essential role in histone mRNA decay after replication. A 2' and 3'-hydroxyl groups at the last nucleotide of the histone 3'-end is required for efficient 3'-end histone mRNA exonuclease activity and degradation of RNA substrates. Also able to degrade the 3'-overhangs of short interfering RNAs (siRNAs) in vitro, suggesting a possible role as regulator of RNA interference (RNAi). Required for binding the 5'-ACCCA-3' sequence present in stem-loop structure. Able to bind other mRNAs. Required for 5.8S rRNA 3'-end processing. Also binds to 5.8s ribosomal RNA. Binds with high affinity to the stem-loop structure of replication-dependent histone pre-mRNAs. In vitro, does not have sequence specificity. In vitro, has weak DNA exonuclease activity. In vitro, shows biphasic kinetics such that there is rapid hydrolysis of the last three unpaired RNA nucleotides in the 39 flanking sequence followed by a much slower cleavage through the stem that occurs over a longer incubation period in the order of hours. ERI1-mediated RNA metabolism plays a key role in chondrogenesis. The chain is 3'-5' exoribonuclease 1 (Eri1) from Rattus norvegicus (Rat).